The primary structure comprises 208 residues: Superoxide dismutase [Mn] 2 (208 aa).

Mn(2+) contacts are provided by H28, H83, D165, and H169.

This sequence belongs to the iron/manganese superoxide dismutase family. Homodimer. The cofactor is Mn(2+).

It carries out the reaction 2 superoxide + 2 H(+) = H2O2 + O2. Destroys superoxide anion radicals which are normally produced within the cells and which are toxic to biological systems. This Bacillus anthracis protein is Superoxide dismutase [Mn] 2 (sodA2).